The chain runs to 3122 residues: DNA polymerase zeta catalytic subunit (3122 aa).

5 disordered regions span residues 270–289 (QRRRNRNESSQISQPESQDC), 425–457 (GYQGEKNRMPLPCHSFGESQNPQNSDDEENEPQ), 487–509 (LCRNAHRSSTEEDDSSSEEEMEW), 524–545 (LDGTADENSDNPLNNENSRAHS), and 842–886 (TSTK…TFEN). Polar residues predominate over residues 277-286 (ESSQISQPES). Residues 497-509 (EEDDSSSEEEMEW) show a composition bias toward acidic residues. Composition is skewed to polar residues over residues 533-545 (DNPLNNENSRAHS) and 842-860 (TSTKSTETGATKDSCTHND). Ser1029 is subject to Phosphoserine. Disordered regions lie at residues 1034-1075 (YPIY…TLSF), 1154-1285 (VYNT…PTGI), 1429-1453 (VSVSEQSKTSETCSPGNAASEESQT), 1538-1616 (KAQS…LSDD), 1842-1869 (NDVLTPTPDSSPRSTSSPLQSKNGSFTP), 1959-1979 (NPRPGSPLRNGQAVVNKESSN), and 2091-2138 (AAVP…RHSS). Thr1040 carries the phosphothreonine modification. Basic residues-rich tracts occupy residues 1042–1063 (KKSHRRKSKHKSAKKKPGKQHR) and 1166–1179 (KASRARAQVKKSKA). Over residues 1215 to 1239 (RANEKSLSRKHAIPADEKMKPHSEA) the composition is skewed to basic and acidic residues. Residues 1243-1270 (PNHQSVSELTSSSGAQALSKQKEMSQTG) are compositionally biased toward polar residues. Over residues 1429 to 1440 (VSVSEQSKTSET) the composition is skewed to low complexity. Composition is skewed to polar residues over residues 1441–1453 (CSPGNAASEESQT) and 1538–1561 (KAQSTNVVQDSTSTHQPDKNISVS). The span at 1566-1587 (KANKRTRPVTSPRKPRTPRRTK) shows a compositional bias: basic residues. Over residues 1588 to 1598 (PKEQTPRRLKV) the composition is skewed to basic and acidic residues. Residues 1602–1615 (NLQTSGHLDNSLSD) show a composition bias toward polar residues. The segment at 1844–1895 (VLTPTPDSSPRSTSSPLQSKNGSFTPRTAHILKPLMSPPSREEIVATLLDHD) is mediates interaction with MAD2L2. Over residues 1846–1859 (TPTPDSSPRSTSSP) the composition is skewed to low complexity. A compositionally biased stretch (polar residues) spans 1860 to 1869 (LQSKNGSFTP). Phosphoserine is present on Ser1964. Zn(2+)-binding residues include Cys3034, Cys3037, Cys3046, and Cys3049. The CysA-type zinc finger occupies 3034–3049 (CPVCDDLTQHGICSKC). Cys3078, Cys3081, Cys3091, and Cys3096 together coordinate [4Fe-4S] cluster. A CysB motif motif is present at residues 3078-3096 (CRNCTGSFDRHIPCVSLNC).

It belongs to the DNA polymerase type-B family. In terms of assembly, heterodimer with MAD2L2. This dimer forms the minimal DNA polymerase zeta complex (Pol-zeta2), with REV3L bearing DNA polymerase catalytic activity, although its activity is very low in this context. Component of the tetrameric Pol-zeta complex (Pol-zeta4), which consists of REV3L, MAD2L2, POLD2 and POLD3; Pol-zeta4 is the fully active form of DNA polymerase zeta. The cofactor is [4Fe-4S] cluster.

It localises to the nucleus. The enzyme catalyses DNA(n) + a 2'-deoxyribonucleoside 5'-triphosphate = DNA(n+1) + diphosphate. Its function is as follows. Catalytic subunit of the DNA polymerase zeta complex, an error-prone polymerase specialized in translesion DNA synthesis (TLS). Lacks an intrinsic 3'-5' exonuclease activity and thus has no proofreading function. The protein is DNA polymerase zeta catalytic subunit (Rev3l) of Mus musculus (Mouse).